The sequence spans 1251 residues: Myosin-1 (1251 aa).

The tract at residues 1–37 (MGQSKRPFKNKEEKKSRGFGRSRHDDAGAGGRPQVKK) is disordered. The segment covering 9-27 (KNKEEKKSRGFGRSRHDDA) has biased composition (basic and acidic residues). Residues 48–727 (IGVSDLTLLS…TLFALEHMRD (680 aa)) form the Myosin motor domain. 141 to 148 (GESGAGKT) contributes to the ATP binding site. Ser369 is modified (phosphoserine). The actin-binding stretch occupies residues 416-498 (TIGILDIYGF…PGVFAALNDA (83 aa)). 2 IQ domains span residues 731–751 (HNMA…RTEC) and 752–777 (AIRI…QGHK). The TH1 domain maps to 785 to 980 (RRRYSLVGSR…PGEPANSVSK (196 aa)). Disordered regions lie at residues 958–1093 (RDDV…SNEL) and 1135–1227 (AKTP…ASIA). Over residues 1040–1052 (VAQSVTAVAAAHA) the composition is skewed to low complexity. A compositionally biased stretch (pro residues) spans 1061 to 1073 (RPPPPPPPTQPPA). In terms of domain architecture, SH3 spans 1074 to 1135 (PKKDTAKALY…PEAYLEPIVA (62 aa)). The segment covering 1139-1148 (SLPPPPPSLP) has biased composition (pro residues). 2 stretches are compositionally biased toward polar residues: residues 1150-1161 (QSKSAVSNTLPN) and 1216-1225 (ATPSSLSNAS).

Belongs to the TRAFAC class myosin-kinesin ATPase superfamily. Myosin family. In terms of processing, phosphorylation of the TEDS site (Ser-369) is required for the polarization of the actin cytoskeleton. Phosphorylation probably activates the myosin-I ATPase activity.

The protein resides in the cytoplasm. Its subcellular location is the cytoskeleton. It is found in the actin patch. In terms of biological role, type-I myosin implicated in the organization of the actin cytoskeleton. Required for proper actin cytoskeleton polarization. At the cell cortex, assembles in patch-like structures together with proteins from the actin-polymerizing machinery and promotes actin assembly. Functions as actin nucleation-promoting factor (NPF) for the Arp2/3 complex. The protein is Myosin-1 (MYO1) of Coccidioides immitis (strain RS) (Valley fever fungus).